The chain runs to 160 residues: Endoribonuclease YbeY (160 aa).

Zn(2+)-binding residues include His127, His131, and His137.

This sequence belongs to the endoribonuclease YbeY family. Zn(2+) is required as a cofactor.

The protein localises to the cytoplasm. Single strand-specific metallo-endoribonuclease involved in late-stage 70S ribosome quality control and in maturation of the 3' terminus of the 16S rRNA. The protein is Endoribonuclease YbeY of Synechococcus sp. (strain RCC307).